Reading from the N-terminus, the 132-residue chain is Small ribosomal subunit protein uS8 (132 aa).

This sequence belongs to the universal ribosomal protein uS8 family. As to quaternary structure, part of the 30S ribosomal subunit. Contacts proteins S5 and S12.

In terms of biological role, one of the primary rRNA binding proteins, it binds directly to 16S rRNA central domain where it helps coordinate assembly of the platform of the 30S subunit. The chain is Small ribosomal subunit protein uS8 from Rubrobacter xylanophilus (strain DSM 9941 / JCM 11954 / NBRC 16129 / PRD-1).